Consider the following 394-residue polypeptide: Elongation factor Tu (394 aa).

In terms of domain architecture, tr-type G spans 10 to 204; it reads KPHINIGTIG…AVDDNIPTPE (195 aa). The G1 stretch occupies residues 19–26; it reads GHVDHGKT. Position 19-26 (19-26) interacts with GTP; that stretch reads GHVDHGKT. T26 contributes to the Mg(2+) binding site. The G2 stretch occupies residues 60–64; sequence GITIN. The segment at 81–84 is G3; that stretch reads DCPG. GTP-binding positions include 81–85 and 136–139; these read DCPGH and NKID. Residues 136–139 form a G4 region; that stretch reads NKID. The segment at 174 to 176 is G5; that stretch reads SAL.

Belongs to the TRAFAC class translation factor GTPase superfamily. Classic translation factor GTPase family. EF-Tu/EF-1A subfamily. As to quaternary structure, monomer.

It localises to the cytoplasm. The catalysed reaction is GTP + H2O = GDP + phosphate + H(+). GTP hydrolase that promotes the GTP-dependent binding of aminoacyl-tRNA to the A-site of ribosomes during protein biosynthesis. The polypeptide is Elongation factor Tu (Chlamydia abortus (strain DSM 27085 / S26/3) (Chlamydophila abortus)).